A 400-amino-acid polypeptide reads, in one-letter code: Formate-dependent phosphoribosylglycinamide formyltransferase (400 aa).

N(1)-(5-phospho-beta-D-ribosyl)glycinamide-binding positions include 22–23 and glutamate 82; that span reads EL. Residues arginine 115, lysine 156, 161–166, 196–199, and glutamate 204 each bind ATP; these read SSGKGQ and EGFI. In terms of domain architecture, ATP-grasp spans 120–309; the sequence is RLAAETLCLP…EFALHARAIL (190 aa). 2 residues coordinate Mg(2+): glutamate 268 and glutamate 280. N(1)-(5-phospho-beta-D-ribosyl)glycinamide is bound by residues aspartate 287, lysine 361, and 368–369; that span reads RR.

The protein belongs to the PurK/PurT family. In terms of assembly, homodimer.

The catalysed reaction is N(1)-(5-phospho-beta-D-ribosyl)glycinamide + formate + ATP = N(2)-formyl-N(1)-(5-phospho-beta-D-ribosyl)glycinamide + ADP + phosphate + H(+). It participates in purine metabolism; IMP biosynthesis via de novo pathway; N(2)-formyl-N(1)-(5-phospho-D-ribosyl)glycinamide from N(1)-(5-phospho-D-ribosyl)glycinamide (formate route): step 1/1. Its function is as follows. Involved in the de novo purine biosynthesis. Catalyzes the transfer of formate to 5-phospho-ribosyl-glycinamide (GAR), producing 5-phospho-ribosyl-N-formylglycinamide (FGAR). Formate is provided by PurU via hydrolysis of 10-formyl-tetrahydrofolate. This Xanthomonas euvesicatoria pv. vesicatoria (strain 85-10) (Xanthomonas campestris pv. vesicatoria) protein is Formate-dependent phosphoribosylglycinamide formyltransferase.